Consider the following 472-residue polypeptide: Argininosuccinate lyase (472 aa).

This sequence belongs to the lyase 1 family. Argininosuccinate lyase subfamily.

It is found in the cytoplasm. The enzyme catalyses 2-(N(omega)-L-arginino)succinate = fumarate + L-arginine. The protein operates within amino-acid biosynthesis; L-arginine biosynthesis; L-arginine from L-ornithine and carbamoyl phosphate: step 3/3. The sequence is that of Argininosuccinate lyase from Mycolicibacterium paratuberculosis (strain ATCC BAA-968 / K-10) (Mycobacterium paratuberculosis).